Consider the following 120-residue polypeptide: Large ribosomal subunit protein uL22 (120 aa).

It belongs to the universal ribosomal protein uL22 family. Part of the 50S ribosomal subunit.

In terms of biological role, this protein binds specifically to 23S rRNA; its binding is stimulated by other ribosomal proteins, e.g. L4, L17, and L20. It is important during the early stages of 50S assembly. It makes multiple contacts with different domains of the 23S rRNA in the assembled 50S subunit and ribosome. Its function is as follows. The globular domain of the protein is located near the polypeptide exit tunnel on the outside of the subunit, while an extended beta-hairpin is found that lines the wall of the exit tunnel in the center of the 70S ribosome. The sequence is that of Large ribosomal subunit protein uL22 from Crocosphaera subtropica (strain ATCC 51142 / BH68) (Cyanothece sp. (strain ATCC 51142)).